The chain runs to 110 residues: UPF0145 protein BLD_1357 (110 aa).

This sequence belongs to the UPF0145 family.

The chain is UPF0145 protein BLD_1357 from Bifidobacterium longum (strain DJO10A).